The sequence spans 317 residues: Gluconeogenesis factor (317 aa).

It belongs to the gluconeogenesis factor family.

It is found in the cytoplasm. Its function is as follows. Required for morphogenesis under gluconeogenic growth conditions. Required, in gluconeogenic growth conditions, for the correct localization of PBP1 and hence for displaying a normal rod shape. The polypeptide is Gluconeogenesis factor (mgfK) (Bacillus subtilis (strain 168)).